A 1071-amino-acid polypeptide reads, in one-letter code: Tricorn protease (1071 aa).

The six-bladed beta propeller stretch occupies residues 39 to 310; it reads MPNLLLNPDI…EKIEKIEIGD (272 aa). Residues 131-132 are binds the substrate's C-terminus; that stretch reads RR. A seven-bladed beta propeller region spans residues 326-675; the sequence is AEDFSPLDGD…EDERTVETDK (350 aa). The tract at residues 679–745 is C-1; helical bundle; the sequence is VSSIHEEFLQ…VEMQGEYRTS (67 aa). Residue His-746 is the Charge relay system of the active site. The PDZ-like stretch occupies residues 761–855; it reads RSGRIACDFK…DLMIDILDDD (95 aa). Residues 856-1061 form a C-2; alpha-beta sandwich region; that stretch reads RFIRYRSWVE…IDALIEELRN (206 aa). Substrate is bound at residue 916–918; sequence GGG. The active-site Nucleophile is the Ser-965. 993 to 995 is a binding site for substrate; the sequence is GIT. The active-site Charge relay system is the Glu-1023.

The protein belongs to the peptidase S41B family. Part of the Tricorn proteolytic complex. Assembles to form a hexameric toroid, 20 copies of which may then assemble to form an icosahedral supermolecule of 14.6 MDa.

The protein localises to the cytoplasm. Functionally, tricorn degrades oligopeptides (probably derived from the proteasome) and channels the products to F1, F2 and F3 proteases, which then catalyze the terminal degradation step, yielding free amino acids. The polypeptide is Tricorn protease (tri) (Thermoplasma acidophilum (strain ATCC 25905 / DSM 1728 / JCM 9062 / NBRC 15155 / AMRC-C165)).